The sequence spans 133 residues: Holo-[acyl-carrier-protein] synthase (133 aa).

Mg(2+)-binding residues include aspartate 8 and glutamate 58.

This sequence belongs to the P-Pant transferase superfamily. AcpS family. The cofactor is Mg(2+).

It is found in the cytoplasm. The enzyme catalyses apo-[ACP] + CoA = holo-[ACP] + adenosine 3',5'-bisphosphate + H(+). Functionally, transfers the 4'-phosphopantetheine moiety from coenzyme A to a Ser of acyl-carrier-protein. This chain is Holo-[acyl-carrier-protein] synthase, found in Sphingopyxis alaskensis (strain DSM 13593 / LMG 18877 / RB2256) (Sphingomonas alaskensis).